The chain runs to 21 residues: Misgurin (21 aa).

Residues 1–21 (RQRVEELSKFSKKGAAARRRK) form a disordered region. Residues 10 to 21 (FSKKGAAARRRK) are compositionally biased toward basic residues.

Its subcellular location is the secreted. Strong antimicrobial activity against several Gram-positive and Gram-negative bacteria and fungi. The chain is Misgurin from Misgurnus anguillicaudatus (Oriental weatherloach).